The following is a 407-amino-acid chain: Endo-1,4-beta-xylanase (407 aa).

A signal peptide spans 1-28 (MRNVVRKPLTIGLALTLLLPMGMTATSA). In terms of domain architecture, GH10 spans 42 to 406 (ALNAPQLDQR…KPAYWAIIDH (365 aa)). The active-site Proton donor is the glutamate 187. Glutamate 293 (nucleophile) is an active-site residue.

It belongs to the glycosyl hydrolase 10 (cellulase F) family.

It localises to the secreted. The enzyme catalyses Endohydrolysis of (1-&gt;4)-beta-D-xylosidic linkages in xylans.. It participates in glycan degradation; xylan degradation. This is Endo-1,4-beta-xylanase from Geobacillus stearothermophilus (Bacillus stearothermophilus).